The primary structure comprises 1473 residues: DNA topoisomerase 2 (1473 aa).

The segment at 1-20 is disordered; sequence MATKLPLQNSNAANVAKAPA. Residues 9 to 20 show a composition bias toward low complexity; the sequence is NSNAANVAKAPA. Residues asparagine 91, asparagine 120, 148–150, and 161–168 contribute to the ATP site; these read SSN and GRNGYGAK. The interval 345–347 is interaction with DNA; sequence NKK. 378 to 380 contributes to the ATP binding site; it reads QTK. The Toprim domain maps to 455–569; sequence CTLILTEGDS…SLLQVPSFLV (115 aa). Residues glutamate 461, aspartate 538, and aspartate 540 each contribute to the Mg(2+) site. Positions 704 to 1163 constitute a Topo IIA-type catalytic domain; the sequence is IPSMVDGLKP…TPKSLWLSDL (460 aa). Tyrosine 794 serves as the catalytic O-(5'-phospho-DNA)-tyrosine intermediate. The segment at 980 to 989 is interaction with DNA; the sequence is KLTTTIATSN. Disordered stretches follow at residues 1195-1230, 1242-1297, and 1313-1473; these read SGAA…SYSA, KPKA…EVEE, and GSAP…EDDE. 2 stretches are compositionally biased toward basic residues: residues 1200–1216 and 1278–1288; these read KVKR…KTTK and PKGRQGAKKKA. Residues 1351-1360 show a composition bias toward low complexity; the sequence is KPAATKAAKP. 2 stretches are compositionally biased toward polar residues: residues 1394–1404 and 1417–1427; these read SPFNKKSSSVM and ENVAGNSSSEK. The segment covering 1453 to 1473 has biased composition (acidic residues); sequence SESESANDSEFDDIEDDEDDE.

It belongs to the type II topoisomerase family. As to quaternary structure, homodimer. It depends on Mg(2+) as a cofactor. Mn(2+) is required as a cofactor. Ca(2+) serves as cofactor.

It carries out the reaction ATP-dependent breakage, passage and rejoining of double-stranded DNA.. Its function is as follows. Control of topological states of DNA by transient breakage and subsequent rejoining of DNA strands. Topoisomerase II makes double-strand breaks. This Arabidopsis thaliana (Mouse-ear cress) protein is DNA topoisomerase 2 (TOP2).